The sequence spans 299 residues: Tyrosine recombinase XerC (299 aa).

The Core-binding (CB) domain occupies methionine 1 to asparagine 85. In terms of domain architecture, Tyr recombinase spans arginine 106–aspartate 285. Active-site residues include arginine 146, lysine 170, histidine 237, arginine 240, and histidine 263. Tyrosine 272 (O-(3'-phospho-DNA)-tyrosine intermediate) is an active-site residue.

The protein belongs to the 'phage' integrase family. XerC subfamily. As to quaternary structure, forms a cyclic heterotetrameric complex composed of two molecules of XerC and two molecules of XerD.

It is found in the cytoplasm. Its function is as follows. Site-specific tyrosine recombinase, which acts by catalyzing the cutting and rejoining of the recombining DNA molecules. The XerC-XerD complex is essential to convert dimers of the bacterial chromosome into monomers to permit their segregation at cell division. It also contributes to the segregational stability of plasmids. The polypeptide is Tyrosine recombinase XerC (Pseudomonas entomophila (strain L48)).